We begin with the raw amino-acid sequence, 492 residues long: Cysteine--tRNA ligase (492 aa).

Cys31 contacts Zn(2+). The short motif at 33 to 43 (PTVYGDPHLGH) is the 'HIGH' region element. The Zn(2+) site is built by Cys226, His251, and Glu255. A 'KMSKS' region motif is present at residues 283–287 (KMGKS). Lys286 is a binding site for ATP.

The protein belongs to the class-I aminoacyl-tRNA synthetase family. In terms of assembly, monomer. The cofactor is Zn(2+).

Its subcellular location is the cytoplasm. The catalysed reaction is tRNA(Cys) + L-cysteine + ATP = L-cysteinyl-tRNA(Cys) + AMP + diphosphate. The protein is Cysteine--tRNA ligase of Azobacteroides pseudotrichonymphae genomovar. CFP2.